We begin with the raw amino-acid sequence, 642 residues long: MSLKKQQQQSDFSAAPARRPPTLQSYHTSPDPRGKQILRQSASFTALNNPRMDTALPQIQDAPSNSKRNSDEGFGTKPRRKNTFSSFVNSVLGSPRNIKISAPENPVHVTHVGYDNQTGQFTGLPKDWQRMLQASGISKKEQEQHPQTMVDIMRFYERNAAGAGDEEVWHKFDNAILRQGEYPDGMSPASATSPRFPQNHEGSFENPRAAPPPPKPSQSSPVPVLSSTIVPNRVAPKPPTVGLIPSRPPPQPPVVSNRAPAARPANEPVTTPPIPENEPVFVNAPPVVPSAIQSPVQYQQQQERAMAAAQQAIIDKQLDRSRSQPAAAVARPRPRTRQSTAFDVRAKLQAICTPGDPTKKYYNLNKIGQGASGGVFTAYETNTNKCVAIKQMNLDLQPKKDLIINEILVMKDSKHKNIVNFLDSYLHGLDLWVVMEYMEGGSLTDVVTFNIMSEGQIAAVCRETLSGLQHLHSKGVIHRDIKSDNILLSMDGEIKLTDFGFCAQINDSQNKRNTMVGTPYWMAPEVVTRKEYGRKVDIWSLGIMAIEMIEGEPPYLTESPLRALYLIATNGTPKIKDEQNLSPVFRDFLHLALRVDPEKRASAHDLLKHPFMSICEPLNSLAPLVKSARISRAQEKAQKGGA.

Polar residues-rich tracts occupy residues 1–12 (MSLKKQQQQSDF) and 38–48 (LRQSASFTALN). Residues 1-82 (MSLKKQQQQS…GFGTKPRRKN (82 aa)) form a disordered region. One can recognise a CRIB domain in the interval 100–113 (ISAPENPVHVTHVG). Disordered stretches follow at residues 180–276 (GEYP…PIPE) and 317–338 (QLDR…RTRQ). Composition is skewed to low complexity over residues 217-227 (SQSSPVPVLSS) and 254-266 (VVSN…RPAN). One can recognise a Protein kinase domain in the interval 361-612 (YYNLNKIGQG…AHDLLKHPFM (252 aa)). Residues 367–375 (IGQGASGGV) and Lys-390 each bind ATP. Asp-480 (proton acceptor) is an active-site residue.

The protein belongs to the protein kinase superfamily. STE Ser/Thr protein kinase family. STE20 subfamily.

The protein resides in the cytoplasm. The protein localises to the nucleus. The catalysed reaction is L-seryl-[protein] + ATP = O-phospho-L-seryl-[protein] + ADP + H(+). It carries out the reaction L-threonyl-[protein] + ATP = O-phospho-L-threonyl-[protein] + ADP + H(+). Functionally, MAP4K component of the MAPK pathway required for the mating pheromone response and the regulation of cell polarity and cell cycle. The sequence is that of Serine/threonine-protein kinase pakA (pakA) from Talaromyces marneffei (Penicillium marneffei).